Reading from the N-terminus, the 501-residue chain is MKFKADEISSIIKERIENFDLNLEIEETGKIISVADGVAKVYGLKNIMAGEMVEFENGDKGMALNLEESSVGIVILGKGEGLKEGASVKRLKKLLKVPVGEALIGRVVNALGEPIDAKGVINANEYRFVEEKAKGIMARKSVHEPLHTGIKAIDALVPIGRGQRELIIGDRQTGKTTVAVDTIISQRGQGVICIYVAIGQKQSTVAQVVKRLEEHGAMEYTIVVNAGASDPAALQYLAPYTGVTMGEFFRDNAKHALIVYDDLSKHAVAYREMSLILRRPPGREAYPGDVFYLHSRLLERASKLNDELGAGSLTALPIIETQAGDVSAYIPTNVISITDGQIFLETDLFNSGIRPAINVGLSVSRVGGAAQIKATKQVSGTLRLDLAQYRELQAFAQFASDLDEASRKQLERGQRMVELLKQPPYSPLSVEKQVVLIFAGTKGFLDDIAVSRIEEFEDGIYPFIEAKHPDIFEQIRSKKALDSDLEEKLAKAINEFKANHL.

169–176 is a binding site for ATP; sequence GDRQTGKT.

The protein belongs to the ATPase alpha/beta chains family. F-type ATPases have 2 components, CF(1) - the catalytic core - and CF(0) - the membrane proton channel. CF(1) has five subunits: alpha(3), beta(3), gamma(1), delta(1), epsilon(1). CF(0) has three main subunits: a(1), b(2) and c(9-12). The alpha and beta chains form an alternating ring which encloses part of the gamma chain. CF(1) is attached to CF(0) by a central stalk formed by the gamma and epsilon chains, while a peripheral stalk is formed by the delta and b chains.

It localises to the cell inner membrane. It catalyses the reaction ATP + H2O + 4 H(+)(in) = ADP + phosphate + 5 H(+)(out). Produces ATP from ADP in the presence of a proton gradient across the membrane. The alpha chain is a regulatory subunit. This chain is ATP synthase subunit alpha, found in Campylobacter jejuni subsp. jejuni serotype O:23/36 (strain 81-176).